Reading from the N-terminus, the 599-residue chain is Sulfite reductase [NADPH] flavoprotein alpha-component (599 aa).

The 139-residue stretch at 64-202 (VTLISASQTG…AASEWRARVV (139 aa)) folds into the Flavodoxin-like domain. FMN-binding positions include 70 to 75 (SQTGNA), 117 to 120 (STQG), and 153 to 162 (LGDTSYEFFC). One can recognise an FAD-binding FR-type domain in the interval 234-448 (DAPLAATLSV…IEHNDNFRLP (215 aa)). FAD-binding positions include T322, A356, 386-389 (RLYS), 404-406 (TVG), Y410, and 419-422 (GGAS). Residues 519–520 (SR), 525–529 (KIYVQ), and D561 contribute to the NADP(+) site. Y599 is a binding site for FAD.

It belongs to the NADPH-dependent sulphite reductase flavoprotein subunit CysJ family. In the N-terminal section; belongs to the flavodoxin family. The protein in the C-terminal section; belongs to the flavoprotein pyridine nucleotide cytochrome reductase family. In terms of assembly, alpha(8)-beta(8). The alpha component is a flavoprotein, the beta component is a hemoprotein. Requires FAD as cofactor. It depends on FMN as a cofactor.

It carries out the reaction hydrogen sulfide + 3 NADP(+) + 3 H2O = sulfite + 3 NADPH + 4 H(+). It participates in sulfur metabolism; hydrogen sulfide biosynthesis; hydrogen sulfide from sulfite (NADPH route): step 1/1. In terms of biological role, component of the sulfite reductase complex that catalyzes the 6-electron reduction of sulfite to sulfide. This is one of several activities required for the biosynthesis of L-cysteine from sulfate. The flavoprotein component catalyzes the electron flow from NADPH -&gt; FAD -&gt; FMN to the hemoprotein component. The sequence is that of Sulfite reductase [NADPH] flavoprotein alpha-component from Salmonella paratyphi B (strain ATCC BAA-1250 / SPB7).